A 197-amino-acid chain; its full sequence is Thymidylate kinase (197 aa).

7 to 14 (GIDGCGKS) serves as a coordination point for ATP.

Belongs to the thymidylate kinase family.

The enzyme catalyses dTMP + ATP = dTDP + ADP. In terms of biological role, phosphorylation of dTMP to form dTDP in both de novo and salvage pathways of dTTP synthesis. This is Thymidylate kinase from Fervidobacterium nodosum (strain ATCC 35602 / DSM 5306 / Rt17-B1).